The primary structure comprises 254 residues: PF03932 family protein CutC (254 aa).

The protein belongs to the CutC family.

It localises to the cytoplasm. This is PF03932 family protein CutC from Yersinia pestis bv. Antiqua (strain Antiqua).